The chain runs to 265 residues: Cytochrome c oxidase subunit 3 (265 aa).

The next 7 membrane-spanning stretches (helical) occupy residues 16 to 36 (PWPISGSLGALATTVGGVMYM), 41 to 61 (GGATLLSLGLIFLLYTMFVWW), 84 to 104 (YGSILFIVSEVMFLFAFFWAS), 137 to 157 (TPILLSSGAAVTWAHHAILAG), 162 to 182 (AVYALVATVSLAIVFTGFQGM), 200 to 220 (FYLATGFHGFHVIIGTLFSII), and 245 to 265 (WHFVDVVRLFLFVSIYWWGGI).

This sequence belongs to the cytochrome c oxidase subunit 3 family. In terms of assembly, component of the cytochrome c oxidase (complex IV, CIV), a multisubunit enzyme composed of a catalytic core of 3 subunits and several supernumerary subunits. The complex exists as a monomer or a dimer and forms supercomplexes (SCs) in the inner mitochondrial membrane with ubiquinol-cytochrome c oxidoreductase (cytochrome b-c1 complex, complex III, CIII).

It is found in the mitochondrion inner membrane. The catalysed reaction is 4 Fe(II)-[cytochrome c] + O2 + 8 H(+)(in) = 4 Fe(III)-[cytochrome c] + 2 H2O + 4 H(+)(out). Functionally, component of the cytochrome c oxidase, the last enzyme in the mitochondrial electron transport chain which drives oxidative phosphorylation. The respiratory chain contains 3 multisubunit complexes succinate dehydrogenase (complex II, CII), ubiquinol-cytochrome c oxidoreductase (cytochrome b-c1 complex, complex III, CIII) and cytochrome c oxidase (complex IV, CIV), that cooperate to transfer electrons derived from NADH and succinate to molecular oxygen, creating an electrochemical gradient over the inner membrane that drives transmembrane transport and the ATP synthase. Cytochrome c oxidase is the component of the respiratory chain that catalyzes the reduction of oxygen to water. Electrons originating from reduced cytochrome c in the intermembrane space (IMS) are transferred via the dinuclear copper A center (CU(A)) of subunit 2 and heme A of subunit 1 to the active site in subunit 1, a binuclear center (BNC) formed by heme A3 and copper B (CU(B)). The BNC reduces molecular oxygen to 2 water molecules using 4 electrons from cytochrome c in the IMS and 4 protons from the mitochondrial matrix. The protein is Cytochrome c oxidase subunit 3 (COX3) of Oenothera berteroana (Bertero's evening primrose).